Here is a 239-residue protein sequence, read N- to C-terminus: Purine nucleoside phosphorylase DeoD-type (239 aa).

Residue histidine 5 coordinates a purine D-ribonucleoside. Phosphate contacts are provided by residues glycine 21, arginine 25, arginine 44, and arginine 89–serine 92. A purine D-ribonucleoside-binding positions include glutamate 180–glutamate 182 and serine 204–aspartate 205. The active-site Proton donor is the aspartate 205.

Belongs to the PNP/UDP phosphorylase family. Homohexamer; trimer of homodimers.

The catalysed reaction is a purine D-ribonucleoside + phosphate = a purine nucleobase + alpha-D-ribose 1-phosphate. It catalyses the reaction a purine 2'-deoxy-D-ribonucleoside + phosphate = a purine nucleobase + 2-deoxy-alpha-D-ribose 1-phosphate. Its function is as follows. Catalyzes the reversible phosphorolytic breakdown of the N-glycosidic bond in the beta-(deoxy)ribonucleoside molecules, with the formation of the corresponding free purine bases and pentose-1-phosphate. The chain is Purine nucleoside phosphorylase DeoD-type from Klebsiella pneumoniae.